A 310-amino-acid polypeptide reads, in one-letter code: tRNA dimethylallyltransferase (310 aa).

Position 13 to 20 (13 to 20 (GPTASGKT)) interacts with ATP. 15 to 20 (TASGKT) is a substrate binding site. Interaction with substrate tRNA regions lie at residues 38-41 (DSAL), 162-166 (QRLSR), 243-248 (RCVGYR), and 276-283 (KRQITWLR).

This sequence belongs to the IPP transferase family. As to quaternary structure, monomer. Requires Mg(2+) as cofactor.

It carries out the reaction adenosine(37) in tRNA + dimethylallyl diphosphate = N(6)-dimethylallyladenosine(37) in tRNA + diphosphate. Functionally, catalyzes the transfer of a dimethylallyl group onto the adenine at position 37 in tRNAs that read codons beginning with uridine, leading to the formation of N6-(dimethylallyl)adenosine (i(6)A). In Vibrio parahaemolyticus serotype O3:K6 (strain RIMD 2210633), this protein is tRNA dimethylallyltransferase.